A 772-amino-acid polypeptide reads, in one-letter code: Rho guanine nucleotide exchange factor 6 (772 aa).

Residues 1–111 (MNPEERVVTW…TLLAVNKATE (111 aa)) enclose the Calponin-homology (CH) domain. The segment at 115–158 (SERPCGRSSSLSATTSSQTNPQAAVPSTTPEQQSEEKAAEMTEN) is disordered. The span at 122–133 (SSSLSATTSSQT) shows a compositional bias: low complexity. At Ser126 the chain carries Phosphoserine. Thr133 is subject to Phosphothreonine. A compositionally biased stretch (polar residues) spans 134–146 (NPQAAVPSTTPEQ). Residues 160 to 219 (SHQLIVKARFNFKQTNEDELSVCKGDIIYVTRVEEGGWWEGTLNGRTGWFPSNYVREIKP) enclose the SH3 domain. Ser225 bears the Phosphoserine mark. In terms of domain architecture, DH spans 241 to 421 (YYTVVLQNIL…KSLMGQCQDL (181 aa)). The 106-residue stretch at 443 to 548 (DIKTLGNVIF…WMEQLNRLTK (106 aa)) folds into the PH domain. Ser488 is modified (phosphoserine). Residues 557 to 573 (SKTSSSSCSTHSSFSST) show a composition bias toward low complexity. Positions 557 to 581 (SKTSSSSCSTHSSFSSTGQPRGPLE) are disordered. 2 positions are modified to phosphoserine: Ser640 and Ser680.

As to quaternary structure, interacts with PAK kinases through the SH3 domain. Interacts with GIT1. Interacts with PARVB. Component of cytoplasmic complexes, which also contain PXN, GIT1 and PAK1. Interacts with BIN2. Identified in a complex with BIN2 and GIT2. Interacts with PARVG; the guanine nucleotide exchange factor activity of ARHGEF6 is essential for PARVG-induced enhancement of cell spreading.

The protein localises to the cell projection. Its subcellular location is the lamellipodium. Functionally, acts as a RAC1 guanine nucleotide exchange factor (GEF). This chain is Rho guanine nucleotide exchange factor 6 (Arhgef6), found in Rattus norvegicus (Rat).